A 500-amino-acid polypeptide reads, in one-letter code: MSKVPRSSSEAEDIWETEDDMTEGDLGYGLGRKPGGIYEVPCSITSKKRSDGKNSSPPPFPRKGEERSETSFQYSRRKGFQDTSAEGYRASRLSSTDSNSELSDEQLRRRLHEALEDVEILKTELEASQRQLEGKEEALKILQSMAMLGKATSHTQTMLQKTIEQKRSLEKEINALQWEMEFDQDRFKNIEESWIQKCDRLNCDNAVLRENLKLRTEEIKMLKSKNAVLNQRYLEALAMLDIKEQKMGQEESGFTDVSGLELAVLGACLCHGPGGSPCSCAKMAASTRKLVLQLRHELETLQKSKEEAHITADAFRIAFEQQLMRKNEQALRLAGGDLCKRAATWINRQHQADDGYPAQRRKKTLGQRLLGILPSENSSKGAEDQDNMQEVFKMLVDLLNDKEEALAHQRKVSYMLARALEDKDTASERNKEKIPMSQTFPFKTAWHDASELCGLRDPVQSNHVSEPMACICSIQHPPKVSDCPRTLKRSCSLPSTLFYK.

The interval 1 to 105 (MSKVPRSSSE…TDSNSELSDE (105 aa)) is disordered. The segment covering 10–23 (EAEDIWETEDDMTE) has biased composition (acidic residues). Polar residues predominate over residues 92 to 101 (RLSSTDSNSE). Coiled coils occupy residues 101 to 237 (ELSD…LEAL) and 286 to 314 (STRK…TADA). The residue at position 492 (serine 492) is a Phosphoserine.

In terms of tissue distribution, expressed in many tissues, with highest levels in spleen, thymus and bone marrow.

The protein localises to the cytoplasm. May be involved in the regulation of cell migration. This is Coiled-coil domain-containing protein 125 (Ccdc125) from Mus musculus (Mouse).